The chain runs to 275 residues: Probable 2' cyclic ADP-D-ribose synthase TcpB (275 aa).

The span at 17-32 (RLKADDSREMSKEKQA) shows a compositional bias: basic and acidic residues. The interval 17–66 (RLKADDSREMSKEKQAQSKAHKAQQAISSAKSLSTQKSKMSELERATRDG) is disordered. The span at 39 to 48 (AQQAISSAKS) shows a compositional bias: low complexity. A compositionally biased stretch (basic and acidic residues) spans 55–64 (KMSELERATR). One can recognise a TIR domain in the interval 142–275 (EEYDFFISHA…EIAKELHSLI (134 aa)). Residues 151-152 (AS) and lysine 181 each bind NAD(+). Glutamate 217 is an active-site residue.

As to quaternary structure, homodimer. Interacts with host TIRAP, and probably host MYD88. Interacts with host TLR4, abolishes the interaction of host TIRAP with TLR4.

The protein resides in the secreted. It localises to the host cell membrane. It catalyses the reaction NAD(+) + H2O = ADP-D-ribose + nicotinamide + H(+). It carries out the reaction NAD(+) = 2'cADPR + nicotinamide + H(+). Functionally, virulence factor that interferes with host Toll-like receptor 2 (TLR2) and TLR4 signaling, resulting in the reduction of dendritic cell maturation, inhibition of pro-inflammatory cytokine secretion and impaired NF-kappa-B activation in macrophages. Binds host lipids. Has NAD(+) hydrolase (NADase) activity, catalyzes cleavage of NAD(+) into ADP-D-ribose (ADPR) and nicotinamide, also generates a cyclization variant of cyclic ADPR (cADPR), termed v-cADPR (probably 2'cADPR). This is Probable 2' cyclic ADP-D-ribose synthase TcpB (tcpB) from Brucella melitensis biotype 2 (strain ATCC 23457).